A 264-amino-acid polypeptide reads, in one-letter code: Thymidylate synthase (264 aa).

Residue R21 participates in dUMP binding. H51 provides a ligand contact to (6R)-5,10-methylene-5,6,7,8-tetrahydrofolate. Residue 126 to 127 (RR) participates in dUMP binding. The Nucleophile role is filled by C146. Residues 166–169 (RSAD), N177, and 207–209 (HIY) each bind dUMP. D169 is a (6R)-5,10-methylene-5,6,7,8-tetrahydrofolate binding site. S263 is a binding site for (6R)-5,10-methylene-5,6,7,8-tetrahydrofolate.

This sequence belongs to the thymidylate synthase family. Bacterial-type ThyA subfamily. Homodimer.

Its subcellular location is the cytoplasm. It carries out the reaction dUMP + (6R)-5,10-methylene-5,6,7,8-tetrahydrofolate = 7,8-dihydrofolate + dTMP. Its pathway is pyrimidine metabolism; dTTP biosynthesis. In terms of biological role, catalyzes the reductive methylation of 2'-deoxyuridine-5'-monophosphate (dUMP) to 2'-deoxythymidine-5'-monophosphate (dTMP) while utilizing 5,10-methylenetetrahydrofolate (mTHF) as the methyl donor and reductant in the reaction, yielding dihydrofolate (DHF) as a by-product. This enzymatic reaction provides an intracellular de novo source of dTMP, an essential precursor for DNA biosynthesis. This chain is Thymidylate synthase, found in Halalkalibacterium halodurans (strain ATCC BAA-125 / DSM 18197 / FERM 7344 / JCM 9153 / C-125) (Bacillus halodurans).